The sequence spans 117 residues: Transcription elongation factor A protein-like 8 (117 aa).

The interval 1–82 (MQKSCDENEG…EEVIRGVDEL (82 aa)) is disordered. Basic and acidic residues predominate over residues 41–82 (NVREETEGSHRGEPAEPSPEPKEDTPARHLNPEEVIRGVDEL). Positions 73 to 100 (EEVIRGVDELERLREEIRRVRNKFVLMH) form a coiled coil.

Belongs to the TFS-II family. TFA subfamily.

The protein resides in the nucleus. Its function is as follows. May be involved in transcriptional regulation. In Mus musculus (Mouse), this protein is Transcription elongation factor A protein-like 8 (Tceal8).